Consider the following 262-residue polypeptide: Acyl-[acyl-carrier-protein]--UDP-N-acetylglucosamine O-acyltransferase (262 aa).

The protein belongs to the transferase hexapeptide repeat family. LpxA subfamily. As to quaternary structure, homotrimer.

It localises to the cytoplasm. It carries out the reaction a (3R)-hydroxyacyl-[ACP] + UDP-N-acetyl-alpha-D-glucosamine = a UDP-3-O-[(3R)-3-hydroxyacyl]-N-acetyl-alpha-D-glucosamine + holo-[ACP]. Its pathway is glycolipid biosynthesis; lipid IV(A) biosynthesis; lipid IV(A) from (3R)-3-hydroxytetradecanoyl-[acyl-carrier-protein] and UDP-N-acetyl-alpha-D-glucosamine: step 1/6. Its function is as follows. Involved in the biosynthesis of lipid A, a phosphorylated glycolipid that anchors the lipopolysaccharide to the outer membrane of the cell. The chain is Acyl-[acyl-carrier-protein]--UDP-N-acetylglucosamine O-acyltransferase from Enterobacter sp. (strain 638).